A 176-amino-acid polypeptide reads, in one-letter code: Peptide deformylase (176 aa).

Fe cation is bound by residues cysteine 94 and histidine 136. Residue glutamate 137 is part of the active site. Residue histidine 140 participates in Fe cation binding.

Belongs to the polypeptide deformylase family. Fe(2+) serves as cofactor.

It carries out the reaction N-terminal N-formyl-L-methionyl-[peptide] + H2O = N-terminal L-methionyl-[peptide] + formate. In terms of biological role, removes the formyl group from the N-terminal Met of newly synthesized proteins. Requires at least a dipeptide for an efficient rate of reaction. N-terminal L-methionine is a prerequisite for activity but the enzyme has broad specificity at other positions. The chain is Peptide deformylase from Bartonella henselae (strain ATCC 49882 / DSM 28221 / CCUG 30454 / Houston 1) (Rochalimaea henselae).